A 296-amino-acid polypeptide reads, in one-letter code: Pantothenate synthetase (296 aa).

37-44 (MGALHTGH) serves as a coordination point for ATP. The active-site Proton donor is the His-44. Gln-68 contacts (R)-pantoate. Residue Gln-68 coordinates beta-alanine. Residue 160 to 163 (GQKD) participates in ATP binding. Residue Gln-166 participates in (R)-pantoate binding. Residues Val-189 and 197–200 (TSSR) each bind ATP.

It belongs to the pantothenate synthetase family. In terms of assembly, homodimer.

It localises to the cytoplasm. The enzyme catalyses (R)-pantoate + beta-alanine + ATP = (R)-pantothenate + AMP + diphosphate + H(+). It participates in cofactor biosynthesis; (R)-pantothenate biosynthesis; (R)-pantothenate from (R)-pantoate and beta-alanine: step 1/1. Functionally, catalyzes the condensation of pantoate with beta-alanine in an ATP-dependent reaction via a pantoyl-adenylate intermediate. In Thermobifida fusca (strain YX), this protein is Pantothenate synthetase.